The sequence spans 1020 residues: Non-canonical nonribosomal peptide synthetase hkm10 (1020 aa).

The tract at residues 21–419 (QMLEDPDAIA…GRFDHQVKIR (399 aa)) is adenylation (A) domain. Positions 526 to 608 (QDKVPSEGAS…QLAHIVDRNQ (83 aa)) constitute a Carrier domain. Ser568 carries the post-translational modification O-(pantetheine 4'-phosphoryl)serine. The interval 652-894 (LTGATGFVGA…FVPIDYVTST (243 aa)) is short-chain dehydrogenase/reductase (R) domain.

Belongs to the NRP synthetase family.

It functions in the pathway secondary metabolite biosynthesis. Non-canonical nonribosomal peptide synthetase; part of the gene cluster that mediates the biosynthesis of hancockiamides, an unusual new family of N-cinnamoylated piperazines. The NRPS hkm10 and the NmrA-like reductase hkm9 are proposed to convert two molecules of L-Phe to the intermediary piperazine called xenocockiamide A. Xenocockiamide A is then converted to hancockiamide D via a series of hydroxylations and O-methylations. The tyrosinase hkm6 may catalyze an aromatic hydroxylation, then the 2-oxoglutarate-dependent Fe(II) dioxygenase hkm4 and the FAD-dependent phenol hydroxylase hkm7 may catalyze consecutive hydroxylations to install 2 more hydroxy groups, and the methyltransferase hkm8 probably catalyzes two methylations using 2 molecules of S-adenosyl-L-methionine (SAM). The NRPS hkm11 activates and transfers trans-cinnamate supplied by the PAL hkm12 to hancockiamide D and produces hancockiamide A. NRPS Hkm11 has the flexibility to tolerate the bulky hancockiamide G as a substrate and the absence of the acetyl-transferase hkm3 opens up the opportunity for hkm11 to introduce a second N-cinnamoyl moiety. The cytochrome P450 monooxygenase hkm5 catalyzes the methylenedioxy bridge formation, converting hancockiamide A into hancockiamide G. Hkm5 can also convert hancockiamide B into hancockiamide C, and hancockiamide D into hancockiamide H. The N-acetyltransferase hkm3 finally transfers an acetyl group to 1-N of piperazine, converting hancockiamide A into hancockiamide B and hancockiamide G into hancockiamide C. The protein is Non-canonical nonribosomal peptide synthetase hkm10 of Aspergillus hancockii.